We begin with the raw amino-acid sequence, 248 residues long: Tryptophan synthase alpha chain (248 aa).

Active-site proton acceptor residues include glutamate 36 and aspartate 47.

This sequence belongs to the TrpA family. As to quaternary structure, tetramer of two alpha and two beta chains.

The enzyme catalyses (1S,2R)-1-C-(indol-3-yl)glycerol 3-phosphate + L-serine = D-glyceraldehyde 3-phosphate + L-tryptophan + H2O. Its pathway is amino-acid biosynthesis; L-tryptophan biosynthesis; L-tryptophan from chorismate: step 5/5. In terms of biological role, the alpha subunit is responsible for the aldol cleavage of indoleglycerol phosphate to indole and glyceraldehyde 3-phosphate. This chain is Tryptophan synthase alpha chain, found in Pyrococcus furiosus (strain ATCC 43587 / DSM 3638 / JCM 8422 / Vc1).